The sequence spans 765 residues: 5-methyltetrahydropteroyltriglutamate--homocysteine methyltransferase (765 aa).

Residues 18-21 (REWK) and lysine 114 contribute to the 5-methyltetrahydropteroyltri-L-glutamate site. Residues 437–439 (IGS) and glutamate 490 contribute to the L-homocysteine site. L-methionine-binding positions include 437–439 (IGS) and glutamate 490. Tryptophan 567 lines the 5-methyltetrahydropteroyltri-L-glutamate pocket. L-homocysteine is bound at residue aspartate 605. Aspartate 605 contacts L-methionine. Residue glutamate 611 participates in 5-methyltetrahydropteroyltri-L-glutamate binding. Residues histidine 647, cysteine 649, and glutamate 671 each contribute to the Zn(2+) site. Histidine 700 functions as the Proton donor in the catalytic mechanism. A Zn(2+)-binding site is contributed by cysteine 732.

The protein belongs to the vitamin-B12 independent methionine synthase family. The cofactor is Zn(2+).

The catalysed reaction is 5-methyltetrahydropteroyltri-L-glutamate + L-homocysteine = tetrahydropteroyltri-L-glutamate + L-methionine. The protein operates within amino-acid biosynthesis; L-methionine biosynthesis via de novo pathway; L-methionine from L-homocysteine (MetE route): step 1/1. In terms of biological role, catalyzes the transfer of a methyl group from 5-methyltetrahydrofolate to homocysteine resulting in methionine formation. The polypeptide is 5-methyltetrahydropteroyltriglutamate--homocysteine methyltransferase (Listeria welshimeri serovar 6b (strain ATCC 35897 / DSM 20650 / CCUG 15529 / CIP 8149 / NCTC 11857 / SLCC 5334 / V8)).